The sequence spans 199 residues: Holliday junction branch migration complex subunit RuvA (199 aa).

The tract at residues 1–64 (MIALLTGRLA…EDSISLFGFR (64 aa)) is domain I. Residues 65 to 143 (TLAEKEFFQL…KMDVAPSAQE (79 aa)) are domain II. The flexible linker stretch occupies residues 144–154 (APSSEAPAEVA). Residues 154-199 (ADDVASALVNLGYKEAVVRKVLAEMSIEPDASTEAVLRQALKVLMK) form a domain III region.

The protein belongs to the RuvA family. Homotetramer. Forms an RuvA(8)-RuvB(12)-Holliday junction (HJ) complex. HJ DNA is sandwiched between 2 RuvA tetramers; dsDNA enters through RuvA and exits via RuvB. An RuvB hexamer assembles on each DNA strand where it exits the tetramer. Each RuvB hexamer is contacted by two RuvA subunits (via domain III) on 2 adjacent RuvB subunits; this complex drives branch migration. In the full resolvosome a probable DNA-RuvA(4)-RuvB(12)-RuvC(2) complex forms which resolves the HJ.

Its subcellular location is the cytoplasm. The RuvA-RuvB-RuvC complex processes Holliday junction (HJ) DNA during genetic recombination and DNA repair, while the RuvA-RuvB complex plays an important role in the rescue of blocked DNA replication forks via replication fork reversal (RFR). RuvA specifically binds to HJ cruciform DNA, conferring on it an open structure. The RuvB hexamer acts as an ATP-dependent pump, pulling dsDNA into and through the RuvAB complex. HJ branch migration allows RuvC to scan DNA until it finds its consensus sequence, where it cleaves and resolves the cruciform DNA. The protein is Holliday junction branch migration complex subunit RuvA of Geobacter sulfurreducens (strain ATCC 51573 / DSM 12127 / PCA).